The sequence spans 945 residues: Collagen-like protein 1 (945 aa).

2 disordered regions span residues 80-226 (SLKG…SPDL) and 257-441 (GEKG…DKGE). Collagen-like domains lie at 83–142 (GDPG…QGDK) and 146–205 (GDVG…KGDK). Composition is skewed to basic and acidic residues over residues 109–145 (QGTKGEQGDQGEQGDKGDKGDKGDVGAKGDQGDKGDQ) and 168–208 (DQGD…KGDK). A glycan (N-linked (GlcNAc...) asparagine; by host) is linked at N211. 5 Collagen-like domains span residues 257–376 (GEKG…KGDK), 383–442 (GDKG…KGEN), 488–547 (GEKG…VGDK), 554–613 (GDKG…KGDV), and 635–694 (GDKG…VGAS). A glycan (N-linked (GlcNAc...) asparagine; by host) is linked at N442. Over residues 488-687 (GEKGDKGDTG…DKGDKGDKGD (200 aa)) the composition is skewed to basic and acidic residues. Positions 488 to 712 (GEKGDKGDTG…SPTTGENGDS (225 aa)) are disordered. Polar residues predominate over residues 703–712 (SPTTGENGDS). Residue N716 is glycosylated (N-linked (GlcNAc...) asparagine; by host). The interval 733–768 (TNIKGDKGDKGDKGDKGDKGDTGDVGLKGDTGTPGS) is disordered. A compositionally biased stretch (basic and acidic residues) spans 736–754 (KGDKGDKGDKGDKGDKGDT). Residues 756–765 (DVGLKGDTGT) are compositionally biased toward low complexity.

Post-translationally, may be hydroxylated on lysine by the viral-encoded procollagen-lysine,2-oxoglutarate 5-dioxygenase.

It is found in the virion. In terms of biological role, may participate in the formation of a layer of cross-linked glycosylated fibrils at the viral surface thus giving it a hairy-like appearance. The protein is Collagen-like protein 1 of Acanthamoeba polyphaga mimivirus (APMV).